A 467-amino-acid polypeptide reads, in one-letter code: Gamma-aminobutyric acid receptor subunit gamma-3 (467 aa).

The first 17 residues, 1–17 (MAPKLLLLLCLFSGLHA), serve as a signal peptide directing secretion. Over 18-256 (RSRKVEEDEY…FELSRRMGYF (239 aa)) the chain is Extracellular. An N-linked (GlcNAc...) asparagine glycan is attached at Asn-110. A disulfide bridge links Cys-171 with Cys-185. A glycan (N-linked (GlcNAc...) asparagine) is linked at Asn-228. The helical transmembrane segment at 257-277 (TIQTYIPCILTVVLSWVSFWI) threads the bilayer. Residues 278–283 (KKDATP) lie on the Cytoplasmic side of the membrane. A helical membrane pass occupies residues 284–303 (ARTALGITTVLTMTTLSTIA). Residues 304-311 (RKSLPRVS) are Extracellular-facing. The chain crosses the membrane as a helical span at residues 312–332 (YVTAMDLFVTVCFLFVFAALM). At 333-446 (EYATLNYYSS…DILELDSYSR (114 aa)) the chain is on the cytoplasmic side. The helical transmembrane segment at 447-467 (VFFPTSFLLFNLVYWVGYLYL) threads the bilayer.

It belongs to the ligand-gated ion channel (TC 1.A.9) family. Gamma-aminobutyric acid receptor (TC 1.A.9.5) subfamily. GABRG3 sub-subfamily. In terms of assembly, heteropentamer, formed by a combination of alpha (GABRA1-6), beta (GABRB1-3), gamma (GABRG1-3), delta (GABRD), epsilon (GABRE), rho (GABRR1-3), pi (GABRP) and theta (GABRQ) chains, each subunit exhibiting distinct physiological and pharmacological properties. May be palmitoylated. Expressed in brain.

It localises to the postsynaptic cell membrane. The protein localises to the cell membrane. The enzyme catalyses chloride(in) = chloride(out). Functionally, gamma subunit of the heteropentameric ligand-gated chloride channel gated by gamma-aminobutyric acid (GABA), a major inhibitory neurotransmitter in the brain. GABA-gated chloride channels, also named GABA(A) receptors (GABAAR), consist of five subunits arranged around a central pore and contain GABA active binding site(s) located at the alpha and beta subunit interface(s). When activated by GABA, GABAARs selectively allow the flow of chloride across the cell membrane down their electrochemical gradient. The chain is Gamma-aminobutyric acid receptor subunit gamma-3 from Homo sapiens (Human).